A 394-amino-acid polypeptide reads, in one-letter code: DNA replication and repair protein RecF (394 aa).

Position 30 to 37 (30 to 37 (GRNGFGKT)) interacts with ATP.

It belongs to the RecF family.

It localises to the cytoplasm. In terms of biological role, the RecF protein is involved in DNA metabolism; it is required for DNA replication and normal SOS inducibility. RecF binds preferentially to single-stranded, linear DNA. It also seems to bind ATP. This chain is DNA replication and repair protein RecF, found in Corynebacterium glutamicum (strain R).